The following is a 347-amino-acid chain: MPRGQKSKLRAREKRRKAREETQGLKVAHATAAEKEECPSSSPVLGDTPTSSPAAGIPQKPQGAPPTTTAAAAVSCTESDEGAKCQGEENASFSQATTSTESSVKDPVAWEAGMLMHFILRKYKMREPIMKADMLKVVDEKYKDHFTEILNGASRRLELVFGLDLKEDNPSGHTYTLVSKLNLTNDGNLSNDWDFPRNGLLMPLLGVIFLKGNSATEEEIWKFMNVLGAYDGEEHLIYGEPRKFITQDLVQEKYLKYEQVPNSDPPRYQFLWGPRAYAETTKMKVLEFLAKMNGATPRDFPSHYEEALRDEEERAQVRSSVRARRRTTATTFRARSRAPFSRSSHPM.

The span at 1-17 (MPRGQKSKLRAREKRRK) shows a compositional bias: basic residues. Positions 1–104 (MPRGQKSKLR…QATTSTESSV (104 aa)) are disordered. 2 stretches are compositionally biased toward polar residues: residues 39–53 (PSSS…TSSP) and 89–102 (ENAS…STES). Residues 108–307 (VAWEAGMLMH…RDFPSHYEEA (200 aa)) form the MAGE domain. A disordered region spans residues 315 to 347 (AQVRSSVRARRRTTATTFRARSRAPFSRSSHPM). Low complexity predominate over residues 328 to 347 (TATTFRARSRAPFSRSSHPM).

Expressed only in testis.

The chain is Melanoma-associated antigen B1 (MAGEB1) from Homo sapiens (Human).